The chain runs to 389 residues: Naringenin-chalcone synthase (389 aa).

The active site involves cysteine 164.

Belongs to the thiolase-like superfamily. Chalcone/stilbene synthases family. In terms of tissue distribution, expressed in glandular trichomes. Detected at low levels in female flowers, stems, seeds, leaves and roots.

The protein resides in the cytoplasm. The enzyme catalyses (E)-4-coumaroyl-CoA + 3 malonyl-CoA + 3 H(+) = 2',4,4',6'-tetrahydroxychalcone + 3 CO2 + 4 CoA. Chalcone synthase that can also use isovaleryl-CoA, isobutyryl-CoA or hexanoyl-CoA as substrates, but that is unable to produce olivetol or olivetolic acid. The chain is Naringenin-chalcone synthase (CHS) from Cannabis sativa (Hemp).